The following is a 466-amino-acid chain: Vimentin (466 aa).

Over residues 1–13 (MSTRSVSSSSYRR) the composition is skewed to low complexity. The segment at 1–31 (MSTRSVSSSSYRRMFGGPGTASRPSSTRSYV) is disordered. S2 is subject to N-acetylserine. A head region spans residues 2–95 (STRSVSSSSY…FSLADAINTE (94 aa)). S5 bears the Phosphoserine mark. S7 carries the post-translational modification Phosphoserine; by PKA and PKC; alternate. S7 carries O-linked (GlcNAc) serine; alternate glycosylation. The residue at position 8 (S8) is a Phosphoserine. Phosphoserine; by PKC occurs at positions 9 and 10. A Phosphothreonine modification is found at T20. At S25 the chain carries Phosphoserine; by PKA and PKC. S26 carries the phosphoserine; by PKC modification. T33 is a glycosylation site (O-linked (GlcNAc) threonine). An O-linked (GlcNAc) serine; alternate glycan is attached at S34. S34 carries the post-translational modification Phosphoserine; by PKC; alternate. S39 carries the post-translational modification Phosphoserine; by CaMK2, PKA, PKC and ROCK2. S42 carries the phosphoserine; by PKC modification. The residue at position 49 (S49) is a Phosphoserine. Y53 carries the post-translational modification Phosphotyrosine. Phosphoserine is present on S55. Residue S56 is modified to Phosphoserine; by CDK5 and CDK1. Y61 is modified (phosphotyrosine). Residue S66 is modified to Phosphoserine; by PKA and PKC. S72 is subject to Phosphoserine; by AURKB and ROCK2. S83 carries the phosphoserine; by CaMK2 modification. S87 bears the Phosphoserine mark. Residues 96–131 (FKNTRTNEKVELQELNDRFANYIDKVRFLEQQNKIL) are coil 1A. A coiled-coil region spans residues 96–131 (FKNTRTNEKVELQELNDRFANYIDKVRFLEQQNKIL). Residues 103-411 (EKVELQELND…KLLEGEESRI (309 aa)) enclose the IF rod domain. K104 is covalently cross-linked (Glycyl lysine isopeptide (Lys-Gly) (interchain with G-Cter in SUMO2)). A Phosphotyrosine modification is found at Y117. Residues K120, K129, and K139 each carry the N6-acetyllysine; alternate modification. K120 and K129 each carry N6-succinyllysine; alternate. Residues K120, K129, and K139 each participate in a glycyl lysine isopeptide (Lys-Gly) (interchain with G-Cter in SUMO2); alternate cross-link. Positions 132–153 (LAELEQLKGQGKSRLGDLYEEE) are linker 1. Phosphoserine is present on S144. The stretch at 154–245 (MRELRRQVDQ…KLHDEEIQEL (92 aa)) forms a coiled coil. The interval 154–245 (MRELRRQVDQ…KLHDEEIQEL (92 aa)) is coil 1B. An N6-acetyllysine modification is found at K168. K188 bears the N6-acetyllysine; alternate mark. Position 188 is an N6-succinyllysine; alternate (K188). Residue S214 is modified to Phosphoserine. K223 bears the N6-acetyllysine; alternate mark. K223 participates in a covalent cross-link: Glycyl lysine isopeptide (Lys-Gly) (interchain with G-Cter in SUMO2); alternate. Phosphoserine is present on S226. K235 is modified (N6-acetyllysine). A linker 12 region spans residues 246 to 268 (QAQIQEQHVQIDMDVSKPDLTAA). K262 participates in a covalent cross-link: Glycyl lysine isopeptide (Lys-Gly) (interchain with G-Cter in SUMO2). The coil 2 stretch occupies residues 269–407 (LRDVRQQYES…ATYRKLLEGE (139 aa)). Residue K294 is modified to N6-acetyllysine; alternate. K294 carries the N6-succinyllysine; alternate modification. K294 is covalently cross-linked (Glycyl lysine isopeptide (Lys-Gly) (interchain with G-Cter in SUMO2); alternate). Residue S299 is modified to Phosphoserine. Positions 303-407 (NRNNDALRQA…ATYRKLLEGE (105 aa)) form a coiled coil. K313 participates in a covalent cross-link: Glycyl lysine isopeptide (Lys-Gly) (interchain with G-Cter in SUMO2). Positions 326–329 (LTCE) match the [IL]-x-C-x-x-[DE] motif motif. The residue at position 373 (K373) is an N6-acetyllysine; alternate. K373 is covalently cross-linked (Glycyl lysine isopeptide (Lys-Gly) (interchain with G-Cter in SUMO2); alternate). Positions 408 to 466 (ESRISLPLPNFSSLNLRETNLDSLPLVDTHSKRTLLIKTVETRDGQVINETSQHHDDLE) are tail. Phosphoserine is present on residues S409, S412, S419, and S420. T426 is subject to Phosphothreonine. S430 is modified (phosphoserine). T436 is modified (phosphothreonine). S438 carries the post-translational modification Phosphoserine. K439 participates in a covalent cross-link: Glycyl lysine isopeptide (Lys-Gly) (interchain with G-Cter in SUMO2). Position 445 is an N6-acetyllysine; alternate (K445). Position 445 is an N6-succinyllysine; alternate (K445). A Glycyl lysine isopeptide (Lys-Gly) (interchain with G-Cter in SUMO2); alternate cross-link involves residue K445. A Glycyl lysine isopeptide (Lys-Gly) (interchain with G-Cter in SUMO1); alternate cross-link involves residue K445. Phosphothreonine occurs at positions 446 and 458. Position 459 is a phosphoserine (S459).

This sequence belongs to the intermediate filament family. As to quaternary structure, homomer assembled from elementary dimers. Identified in complexes that contain VIM, EZR, AHNAK, BFSP1, BFSP2, ANK2, PLEC, PRX and spectrin. Interacts with BCAS3. Interacts with LGSN. Interacts with SYNM. Interacts (via rod region) with PLEC (via CH 1 domain). Interacts with STK33. Interacts with LARP6. Interacts with RAB8B. Interacts with TOR1A; the interaction associates TOR1A with the cytoskeleton. Interacts with TOR1AIP1. Interacts with TOR1AIP1. Interacts with DIAPH1. Interacts with EPPK1; interaction is dependent of higher-order structure of intermediate filament. Interacts with the non-receptor tyrosine kinase SRMS; the interaction leads to phosphorylation of VIM. Interacts with NOD2. Interacts (via head region) with CORO1C. Interacts with HDGF. Interacts with PRKCE (via phorbol-ester/DAG-type 2 domain). Interacts with BFSP2. Interacts with PPL. Interacts with PKP1 and PKP2. Interacts with SCRIB (via PDZ domains); the interaction protects SCRIB from proteasomal degradation and facilitates SCRIB localization to intermediate filaments, the interaction is reduced by cell contact inhibition. In terms of processing, one of the most prominent phosphoproteins in various cells of mesenchymal origin. Phosphorylation is enhanced during cell division, at which time vimentin filaments are significantly reorganized. Phosphorylation by PKN1 inhibits the formation of filaments. Filament disassembly during mitosis is promoted by phosphorylation at Ser-55 as well as by nestin. Phosphorylated at Ser-56 by CDK5 during neutrophil secretion in the cytoplasm. Phosphorylated by STK33. Phosphorylated on tyrosine residues by SRMS. Post-translationally, S-nitrosylation is induced by interferon-gamma and oxidatively-modified low-densitity lipoprotein (LDL(ox)) possibly implicating the iNOS-S100A8/9 transnitrosylase complex.

It is found in the cytoplasm. Its subcellular location is the cytoskeleton. The protein resides in the nucleus matrix. The protein localises to the cell membrane. Functionally, vimentins are class-III intermediate filaments found in various non-epithelial cells, especially mesenchymal cells. Vimentin is attached to the nucleus, endoplasmic reticulum, and mitochondria, either laterally or terminally. Plays a role in cell directional movement, orientation, cell sheet organization and Golgi complex polarization at the cell migration front. Protects SCRIB from proteasomal degradation and facilitates its localization to intermediate filaments in a cell contact-mediated manner. Its function is as follows. Involved with LARP6 in the stabilization of type I collagen mRNAs for CO1A1 and CO1A2. This Bos taurus (Bovine) protein is Vimentin (VIM).